We begin with the raw amino-acid sequence, 301 residues long: Phosphatidylglycerol--prolipoprotein diacylglyceryl transferase (301 aa).

The next 7 helical transmembrane spans lie at 17–37 (LAVR…IVVG), 59–79 (MLFY…VLFY), 97–117 (GGMS…LFAW), 129–149 (FVAP…FING), 203–223 (PSQL…LWLF), 230–250 (VGAA…TVEF), and 257–277 (FLGL…PMII). Arg-142 contacts a 1,2-diacyl-sn-glycero-3-phospho-(1'-sn-glycerol).

This sequence belongs to the Lgt family.

The protein resides in the cell inner membrane. The enzyme catalyses L-cysteinyl-[prolipoprotein] + a 1,2-diacyl-sn-glycero-3-phospho-(1'-sn-glycerol) = an S-1,2-diacyl-sn-glyceryl-L-cysteinyl-[prolipoprotein] + sn-glycerol 1-phosphate + H(+). Its pathway is protein modification; lipoprotein biosynthesis (diacylglyceryl transfer). In terms of biological role, catalyzes the transfer of the diacylglyceryl group from phosphatidylglycerol to the sulfhydryl group of the N-terminal cysteine of a prolipoprotein, the first step in the formation of mature lipoproteins. The polypeptide is Phosphatidylglycerol--prolipoprotein diacylglyceryl transferase (Paraburkholderia phymatum (strain DSM 17167 / CIP 108236 / LMG 21445 / STM815) (Burkholderia phymatum)).